A 268-amino-acid chain; its full sequence is AB hydrolase superfamily protein YisY (268 aa).

The AB hydrolase-1 domain maps to 23–254 (PIIFLHGWPL…NSGHGAFYEE (232 aa)). Catalysis depends on residues Ser96, Asp220, and His248.

This sequence belongs to the AB hydrolase superfamily.

The polypeptide is AB hydrolase superfamily protein YisY (yisY) (Bacillus subtilis (strain 168)).